A 377-amino-acid chain; its full sequence is Prostaglandin reductase-3 (377 aa).

Position 35 is an N6-acetyllysine (Lys35). NADP(+)-binding residues include Thr185, Ser205, Lys209, Tyr224, Ser247, Ile269, and Tyr275. At Ser299 the chain carries Phosphoserine. Residues 303–305 (FFL) and Asn361 each bind NADP(+).

This sequence belongs to the zinc-containing alcohol dehydrogenase family. Quinone oxidoreductase subfamily.

The protein localises to the peroxisome. It carries out the reaction 13,14-dihydro-15-oxo-prostaglandin E2 + NADP(+) = 15-oxoprostaglandin E2 + NADPH + H(+). The enzyme catalyses 13,14-dihydro-15-oxo-prostaglandin E1 + NADP(+) = 15-oxoprostaglandin E1 + NADPH + H(+). The catalysed reaction is 13,14-dihydro-15-oxo-PGF2alpha + NADP(+) = 15-oxoprostaglandin F2alpha + NADPH + H(+). It catalyses the reaction 13,14-dihydro-15-oxo-prostaglandin F1alpha + NADP(+) = 15-oxoprostaglandin F1alpha + NADPH + H(+). Functionally, functions as 15-oxo-prostaglandin 13-reductase and acts on 15-keto-PGE1, 15-keto-PGE2, 15-keto-PGE1-alpha and 15-keto-PGE2-alpha with highest efficiency towards 15-keto-PGE2-alpha. Overexpression represses transcriptional activity of PPARG and inhibits adipocyte differentiation. The protein is Prostaglandin reductase-3 (PTGR3) of Bos taurus (Bovine).